Here is a 425-residue protein sequence, read N- to C-terminus: Serine/threonine-protein kinase VRK1 (425 aa).

Positions 38–329 constitute a Protein kinase domain; sequence WKLGSAVGQG…KLRGILQQGL (292 aa). ATP-binding positions include 44 to 52 and Lys-72; that span reads VGQGGFGLL. Asp-178 acts as the Proton acceptor in catalysis. The interval 343–425 is disordered; the sequence is GVATNSTSLP…KSRGRPKKNS (83 aa). Basic residues predominate over residues 415–425; sequence KKSRGRPKKNS.

This sequence belongs to the protein kinase superfamily. CK1 Ser/Thr protein kinase family. VRK subfamily.

It localises to the nucleus. Its subcellular location is the cytoplasm. It is found in the cajal body. It carries out the reaction L-seryl-[protein] + ATP = O-phospho-L-seryl-[protein] + ADP + H(+). The catalysed reaction is L-threonyl-[protein] + ATP = O-phospho-L-threonyl-[protein] + ADP + H(+). In terms of biological role, serine/threonine kinase involved in the regulation of key cellular processes including the cell cycle, nuclear condensation, transcription regulation, and DNA damage response. Controls chromatin organization and remodeling by mediating phosphorylation of histone H3 on 'Thr-4' and histone H2AX (H2aXT4ph). It also phosphorylates KAT5 in response to DNA damage, promoting KAT5 association with chromatin and histone acetyltransferase activity. Is involved in the regulation of cell cycle progression of neural progenitors, and is required for proper cortical neuronal migration. Is involved in neurite elongation and branching in motor neurons, and has an essential role in Cajal bodies assembly, acting through COIL phosphorylation and the control of coilin degradation. Involved in Golgi disassembly during the cell cycle: following phosphorylation by PLK3 during mitosis, it is required to induce Golgi fragmentation. Phosphorylates BANF1: disrupts its ability to bind DNA, reduces its binding to LEM domain-containing proteins and causes its relocalization from the nucleus to the cytoplasm. Phosphorylates TP53BP1 and p53/TP53 on 'Thr-18', preventing the interaction between p53/TP53 and MDM2. Phosphorylates ATF2 which activates its transcriptional activity. Phosphorylates JUN. The protein is Serine/threonine-protein kinase VRK1 (vrk1) of Danio rerio (Zebrafish).